Here is a 290-residue protein sequence, read N- to C-terminus: Protease HtpX homolog (290 aa).

Transmembrane regions (helical) follow at residues 4–24 (IFLF…VLSL) and 39–59 (PMLL…SLLI). His-144 lines the Zn(2+) pocket. Glu-145 is an active-site residue. Position 148 (His-148) interacts with Zn(2+). 2 consecutive transmembrane segments (helical) span residues 159–179 (LVQG…GYFV) and 197–217 (ITVI…VAWF). Glu-222 contacts Zn(2+).

The protein belongs to the peptidase M48B family. Requires Zn(2+) as cofactor.

The protein localises to the cell inner membrane. The chain is Protease HtpX homolog from Janthinobacterium sp. (strain Marseille) (Minibacterium massiliensis).